The chain runs to 54 residues: Lectin alpha-1 chain (54 aa).

The protein belongs to the leguminous lectin family. In terms of assembly, tetramer of two alpha and two beta chains.

This is Lectin alpha-1 chain from Lathyrus hirsutus (Rough pea).